A 740-amino-acid chain; its full sequence is Elongation factor 2 (740 aa).

Residues 23–264 (AQIRNAGTLA…MIIEHVPPPN (242 aa)) form the tr-type G domain. Residues 32–39 (AHVDHGKT), 98–102 (DTPGH), and 152–155 (NKID) each bind GTP. A Diphthamide modification is found at His-605.

Belongs to the TRAFAC class translation factor GTPase superfamily. Classic translation factor GTPase family. EF-G/EF-2 subfamily.

The protein localises to the cytoplasm. Catalyzes the GTP-dependent ribosomal translocation step during translation elongation. During this step, the ribosome changes from the pre-translocational (PRE) to the post-translocational (POST) state as the newly formed A-site-bound peptidyl-tRNA and P-site-bound deacylated tRNA move to the P and E sites, respectively. Catalyzes the coordinated movement of the two tRNA molecules, the mRNA and conformational changes in the ribosome. The protein is Elongation factor 2 of Pyrobaculum neutrophilum (strain DSM 2338 / JCM 9278 / NBRC 100436 / V24Sta) (Thermoproteus neutrophilus).